A 525-amino-acid chain; its full sequence is ATP synthase subunit beta, mitochondrial (525 aa).

A mitochondrion-targeting transit peptide spans 1-44; the sequence is MLKKQALSGIRRFSLATKQSFVKTSYKLPRKSWLNTAKFNTIRY. Residue 203 to 210 participates in ATP binding; it reads GGAGVGKT.

It belongs to the ATPase alpha/beta chains family. As to quaternary structure, F-type ATPases have 2 components, CF(1) - the catalytic core - and CF(0) - the membrane proton channel. CF(1) has five subunits: alpha(3), beta(3), gamma(1), delta(1), epsilon(1). CF(0) has three main subunits: a, b and c.

It is found in the mitochondrion. Its subcellular location is the mitochondrion inner membrane. The enzyme catalyses ATP + H2O + 4 H(+)(in) = ADP + phosphate + 5 H(+)(out). Its function is as follows. Mitochondrial membrane ATP synthase (F(1)F(0) ATP synthase or Complex V) produces ATP from ADP in the presence of a proton gradient across the membrane which is generated by electron transport complexes of the respiratory chain. F-type ATPases consist of two structural domains, F(1) - containing the extramembraneous catalytic core, and F(0) - containing the membrane proton channel, linked together by a central stalk and a peripheral stalk. During catalysis, ATP synthesis in the catalytic domain of F(1) is coupled via a rotary mechanism of the central stalk subunits to proton translocation. Subunits alpha and beta form the catalytic core in F(1). Rotation of the central stalk against the surrounding alpha(3)beta(3) subunits leads to hydrolysis of ATP in three separate catalytic sites on the beta subunits. In Schizosaccharomyces pombe (strain 972 / ATCC 24843) (Fission yeast), this protein is ATP synthase subunit beta, mitochondrial (atp2).